We begin with the raw amino-acid sequence, 349 residues long: Phosphoribosylformylglycinamidine cyclo-ligase (349 aa).

It belongs to the AIR synthase family.

Its subcellular location is the cytoplasm. It catalyses the reaction 2-formamido-N(1)-(5-O-phospho-beta-D-ribosyl)acetamidine + ATP = 5-amino-1-(5-phospho-beta-D-ribosyl)imidazole + ADP + phosphate + H(+). Its pathway is purine metabolism; IMP biosynthesis via de novo pathway; 5-amino-1-(5-phospho-D-ribosyl)imidazole from N(2)-formyl-N(1)-(5-phospho-D-ribosyl)glycinamide: step 2/2. In Methanococcus maripaludis (strain C5 / ATCC BAA-1333), this protein is Phosphoribosylformylglycinamidine cyclo-ligase.